A 113-amino-acid chain; its full sequence is UPF0102 protein Shal_4069 (113 aa).

It belongs to the UPF0102 family.

This Shewanella halifaxensis (strain HAW-EB4) protein is UPF0102 protein Shal_4069.